Consider the following 1004-residue polypeptide: 2-oxoglutarate dehydrogenase E1 component (1004 aa).

The protein belongs to the alpha-ketoglutarate dehydrogenase family. Homodimer. Part of the 2-oxoglutarate dehydrogenase (OGDH) complex composed of E1 (2-oxoglutarate dehydrogenase), E2 (dihydrolipoamide succinyltransferase) and E3 (dihydrolipoamide dehydrogenase); the complex contains multiple copies of the three enzymatic components (E1, E2 and E3). Thiamine diphosphate is required as a cofactor.

It carries out the reaction N(6)-[(R)-lipoyl]-L-lysyl-[protein] + 2-oxoglutarate + H(+) = N(6)-[(R)-S(8)-succinyldihydrolipoyl]-L-lysyl-[protein] + CO2. Functionally, E1 component of the 2-oxoglutarate dehydrogenase (OGDH) complex which catalyzes the decarboxylation of 2-oxoglutarate, the first step in the conversion of 2-oxoglutarate to succinyl-CoA and CO(2). In Brucella suis biovar 1 (strain 1330), this protein is 2-oxoglutarate dehydrogenase E1 component.